Consider the following 99-residue polypeptide: Plastocyanin (99 aa).

Positions 1–99 constitute a Plastocyanin-like domain; sequence AEVLLGSSDG…AGMVGKVTVN (99 aa). Positions 37, 84, 87, and 92 each coordinate Cu cation.

Belongs to the plastocyanin family. Requires Cu(2+) as cofactor.

Its subcellular location is the plastid. It is found in the chloroplast thylakoid membrane. In terms of biological role, participates in electron transfer between P700 and the cytochrome b6-f complex in photosystem I. The protein is Plastocyanin (PETE) of Lactuca sativa (Garden lettuce).